A 628-amino-acid polypeptide reads, in one-letter code: MRYITTPIYYVNDVPHLGHAYTTIIADTLARFYRLQGHETRFLTGTDEHGQKIEEAAKLRNSTPQEYADKISFEFKKLWDEFEITYDIYARTTDTRHIEFIKAMFLKMWQKGDIYKDEYEGHYCISCESFFTQSQLINDCSCPDCGKQTRILKEESYFFKLSKYQDKILQWYEEKDPILPKNKKNELINFVQNGLKDLSITRTSFDWGIKLPQEINDDKHIIYVWLDALFIYVSSLDFQNKGENAKFWPAHVHLVGKDILRFHAIYWPAFLMSVDLPLPKFIGAHGWWTKEGEKMSKSKGNVVKPKEVVDAYGSEAFRYFLLREVPFGNDGDFSENMLINRINAELSNEFGNLLNRIIGMSTKYSQGNISKEGVLKFYNAELNQAKEHLNLAVEFLENLQCNRYLEELFKALSVANLAISKYEPWSLIKENKHEQANALVALCANILAKTSLLLSPTLPKSSQKVALALNFEISSANYTKMILDNELLDFKANPCEALFPKVEKALLKQEIKEEPKKEESPKIKIDDFAKIEIKVAKVLDCQNIEGSEKLLKFQLELDDKEIRQVLSGIAKYYKASDLIGKQVCVISNLKKAKIFGHESDGMILSAKSGDKLVLIAPEQLVQNGSLVG.

Positions 9–19 (YYVNDVPHLGH) match the 'HIGH' region motif. 4 residues coordinate Zn(2+): Cys124, Cys127, Cys142, and Cys145. The short motif at 294-298 (KMSKS) is the 'KMSKS' region element. ATP is bound at residue Lys297. A tRNA-binding domain is found at 527-628 (DFAKIEIKVA…QLVQNGSLVG (102 aa)).

This sequence belongs to the class-I aminoacyl-tRNA synthetase family. MetG type 2A subfamily. As to quaternary structure, homodimer. Requires Zn(2+) as cofactor.

It localises to the cytoplasm. The enzyme catalyses tRNA(Met) + L-methionine + ATP = L-methionyl-tRNA(Met) + AMP + diphosphate. Is required not only for elongation of protein synthesis but also for the initiation of all mRNA translation through initiator tRNA(fMet) aminoacylation. The sequence is that of Methionine--tRNA ligase (metG) from Campylobacter jejuni subsp. jejuni serotype O:2 (strain ATCC 700819 / NCTC 11168).